The sequence spans 1079 residues: MDDDDDSCLLDLIGDPQALNYFLHGPSNKSSNDDLTNAGYSAANSNSIFANSSNADPKSSLKGVSNQLGEGPSDGLPLSSSLQFLEDELESSPLPDLTEDQPFDILQKSLQEANITEQTLAEEAYLDASIGSSQQFAQAQLHPSSSASFTQASNVSNYSGQTLQPIGVTHVPVGASFASNTVGVQHGFMQHVGISVPSQHLSNSSQISGSGQIQLIGSFGNHPSMMTINNLDGSQIILKGSGQQAPSNVSGGLLVHRQTPNGNSLFGNSSSSPVAQPVTVPFNSTNFQTSLPVHNIIIQRGLAPNSNKVPINIQPKPIQMGQQNTYNVNNLGIQQHHVQQGISFASASSPQGSVVGPHMSVNIVNQQNTRKPVTSQAVSSTGGSIVIHSPMGQPHAPQSQFLIPTSLSVSSNSVHHVQTINGQLLQTQPSQLISGQVASEHVMLNRNSSNMLRTNQPYTGPMLNNQNTAVHLVSGQTFAASGSPVIANHASPQLVGGQMPLQQASPTVLHLSPGQSSVSQGRPGFATMPSVTSMSGPSRFPAVSSASTAHPSLGSAVQSGSSGSNFTGDQLTQPNRTPVPVSVSHRLPVSSSKSTSTFSNTPGTGTQQQFFCQAQKKCLNQTSPISAPKTTDGLRQAQIPGLLSTTLPGQDSGSKVISASLGTAQPQQEKVVGSSPGHPAVQVESHSGGQKRPAAKQLTKGAFILQQLQRDQAHTVTPDKSHFRSLSDAVQRLLSYHVCQGSMPTEEDLRKVDNEFETVATQLLKRTQAMLNKYRCLLLEDAMRINPSAEMVMIDRMFNQEERASLSRDKRLALVDPEGFQADFCCSFKLDKAAHETQFGRSDQHGSKASSSLQPPAKAQGRDRAKTGVTEPMNHDQFHLVPNHIVVSAEGNISKKTECLGRALKFDKVGLVQYQSTSEEKASRREPLKASQCSPGPEGHRKTSSRSDHGTESKLSSILADSHLEMTCNNSFQDKSLRNSPKNEVLHTDIMKGSGEPQPDLQLTKSLETTFKNILELKKAGRQPQSDPTVSGSVELDFPNFSPMASQENCLEKFIPDHSEGVVETDSILEAAVNSILEC.

2 disordered regions span residues 51–79 (NSSNADPKSSLKGVSNQLGEGPSDGLPLS) and 509–604 (LHLS…TPGT). The segment covering 68 to 79 (LGEGPSDGLPLS) has biased composition (low complexity). The segment covering 544 to 576 (SSASTAHPSLGSAVQSGSSGSNFTGDQLTQPNR) has biased composition (polar residues). Over residues 590–604 (SSSKSTSTFSNTPGT) the composition is skewed to low complexity. Position 623 is a phosphoserine (S623). Disordered regions lie at residues 669-691 (EKVVGSSPGHPAVQVESHSGGQK), 837-877 (TQFG…NHDQ), and 917-954 (TSEEKASRREPLKASQCSPGPEGHRKTSSRSDHGTESK). Composition is skewed to basic and acidic residues over residues 918–928 (SEEKASRREPL) and 938–952 (EGHRKTSSRSDHGTE). A Phosphoserine modification is found at S980.

In terms of assembly, component of the multiprotein chromatin-remodeling complexes SWI/SNF: SWI/SNF-A (BAF), SWI/SNF-B (PBAF) and related complexes. The canonical complex contains a catalytic subunit (either SMARCA4/BRG1/BAF190A or SMARCA2/BRM/BAF190B) and at least SMARCE1, ACTL6A/BAF53, SMARCC1/BAF155, SMARCC2/BAF170, and SMARCB1/SNF5/BAF47. Other subunits specific to each of the complexes may also be present permitting several possible combinations developmentally and tissue specific. Component of the SWI/SNF (GBAF) subcomplex, which includes at least BICRA or BICRAL (mutually exclusive), BRD9, SS18, the core BAF subunits, SMARCA2/BRM, SMARCA4/BRG1/BAF190A, ACTL6A/BAF53, SMARCC1/BAF155, and SMARCD1/BAF60A.

Functionally, component of SWI/SNF chromatin remodeling subcomplex GBAF that carries out key enzymatic activities, changing chromatin structure by altering DNA-histone contacts within a nucleosome in an ATP-dependent manner. This is BRD4-interacting chromatin-remodeling complex-associated protein-like from Homo sapiens (Human).